The following is a 147-amino-acid chain: MKTFSAKPADVTHEWFVIDATDKVLGRVASEVALRLRGKHKAIYTPHVDTGDFIVIINAAQLRVTGAKSTDKIYYRHSGYPGGITATNFRDMQTKFPGRALEKAVKGMLPKGPLGYAMIKKLKVYGGAEHPHTAQQPKVLEIAGAAK.

Belongs to the universal ribosomal protein uL13 family. In terms of assembly, part of the 50S ribosomal subunit.

This protein is one of the early assembly proteins of the 50S ribosomal subunit, although it is not seen to bind rRNA by itself. It is important during the early stages of 50S assembly. This chain is Large ribosomal subunit protein uL13, found in Polaromonas naphthalenivorans (strain CJ2).